A 28-amino-acid polypeptide reads, in one-letter code: Aspartate aminotransferase, mitochondrial (28 aa).

Belongs to the class-I pyridoxal-phosphate-dependent aminotransferase family. In terms of assembly, homodimer. It depends on pyridoxal 5'-phosphate as a cofactor.

The protein localises to the mitochondrion matrix. The catalysed reaction is L-aspartate + 2-oxoglutarate = oxaloacetate + L-glutamate. Functionally, plays a key role in amino acid metabolism. Important for metabolite exchange between mitochondria and cytosol. The polypeptide is Aspartate aminotransferase, mitochondrial (Catharanthus roseus (Madagascar periwinkle)).